The primary structure comprises 334 residues: Holliday junction branch migration complex subunit RuvB (334 aa).

The segment at 1–182 (MNERMVDQSM…FGVHLRLEYY (182 aa)) is large ATPase domain (RuvB-L). ATP is bound by residues leucine 21, arginine 22, glycine 63, lysine 66, threonine 67, threonine 68, 129-131 (EDF), arginine 172, tyrosine 182, and arginine 219. Threonine 67 serves as a coordination point for Mg(2+). The tract at residues 183-253 (NESDLKEIII…TTKHALGLLQ (71 aa)) is small ATPAse domain (RuvB-S). The head domain (RuvB-H) stretch occupies residues 256 to 334 (QHGLDYIDHK…HFAKSNEERE (79 aa)). Residues arginine 292, arginine 311, and arginine 316 each contribute to the DNA site.

The protein belongs to the RuvB family. In terms of assembly, homohexamer. Forms an RuvA(8)-RuvB(12)-Holliday junction (HJ) complex. HJ DNA is sandwiched between 2 RuvA tetramers; dsDNA enters through RuvA and exits via RuvB. An RuvB hexamer assembles on each DNA strand where it exits the tetramer. Each RuvB hexamer is contacted by two RuvA subunits (via domain III) on 2 adjacent RuvB subunits; this complex drives branch migration. In the full resolvosome a probable DNA-RuvA(4)-RuvB(12)-RuvC(2) complex forms which resolves the HJ.

The protein localises to the cytoplasm. It carries out the reaction ATP + H2O = ADP + phosphate + H(+). Functionally, the RuvA-RuvB-RuvC complex processes Holliday junction (HJ) DNA during genetic recombination and DNA repair, while the RuvA-RuvB complex plays an important role in the rescue of blocked DNA replication forks via replication fork reversal (RFR). RuvA specifically binds to HJ cruciform DNA, conferring on it an open structure. The RuvB hexamer acts as an ATP-dependent pump, pulling dsDNA into and through the RuvAB complex. RuvB forms 2 homohexamers on either side of HJ DNA bound by 1 or 2 RuvA tetramers; 4 subunits per hexamer contact DNA at a time. Coordinated motions by a converter formed by DNA-disengaged RuvB subunits stimulates ATP hydrolysis and nucleotide exchange. Immobilization of the converter enables RuvB to convert the ATP-contained energy into a lever motion, pulling 2 nucleotides of DNA out of the RuvA tetramer per ATP hydrolyzed, thus driving DNA branch migration. The RuvB motors rotate together with the DNA substrate, which together with the progressing nucleotide cycle form the mechanistic basis for DNA recombination by continuous HJ branch migration. Branch migration allows RuvC to scan DNA until it finds its consensus sequence, where it cleaves and resolves cruciform DNA. This Staphylococcus aureus (strain MRSA252) protein is Holliday junction branch migration complex subunit RuvB.